Reading from the N-terminus, the 527-residue chain is Bifunctional purine biosynthesis protein PurH (527 aa).

One can recognise an MGS-like domain in the interval 1 to 149; sequence MTADLLPVRR…KNFARVAVAT (149 aa).

This sequence belongs to the PurH family.

It carries out the reaction (6R)-10-formyltetrahydrofolate + 5-amino-1-(5-phospho-beta-D-ribosyl)imidazole-4-carboxamide = 5-formamido-1-(5-phospho-D-ribosyl)imidazole-4-carboxamide + (6S)-5,6,7,8-tetrahydrofolate. It catalyses the reaction IMP + H2O = 5-formamido-1-(5-phospho-D-ribosyl)imidazole-4-carboxamide. The protein operates within purine metabolism; IMP biosynthesis via de novo pathway; 5-formamido-1-(5-phospho-D-ribosyl)imidazole-4-carboxamide from 5-amino-1-(5-phospho-D-ribosyl)imidazole-4-carboxamide (10-formyl THF route): step 1/1. It participates in purine metabolism; IMP biosynthesis via de novo pathway; IMP from 5-formamido-1-(5-phospho-D-ribosyl)imidazole-4-carboxamide: step 1/1. This is Bifunctional purine biosynthesis protein PurH from Stenotrophomonas maltophilia (strain R551-3).